The primary structure comprises 153 residues: Endoribonuclease RegB (153 aa).

Its activity is regulated as follows. Activity is stimulated 10- to 100-fold by host ribosomal protein S1, which also helps confer substrate choice. Essential to the early nucleolytic processing of a number of T4 messenger RNAs. Specifically cleaves after the GG dinucleotide GGAG within consensus 5'-GGAGRAYARAA-3' (R is a purine and Y is a pyrimidine) sequences found mainly in translation initiation sites. The chain is Endoribonuclease RegB (regB) from Enterobacteria phage T4 (Bacteriophage T4).